We begin with the raw amino-acid sequence, 291 residues long: Alpha/beta-gliadin A-II (291 aa).

The first 20 residues, 1-20, serve as a signal peptide directing secretion; that stretch reads MKTFPILALLAIVATTATTA. The segment covering 32–55 has biased composition (low complexity); the sequence is NPSQQQPQEQVPLVQEQQFQGQQQ. Disordered stretches follow at residues 32 to 120 and 227 to 250; these read NPSQ…QQQQ and QQYP…GSFQ. Composition is skewed to pro residues over residues 56 to 71 and 81 to 104; these read PFPP…PFPS and FPQP…PQPQ. Low complexity-rich tracts occupy residues 105 to 120 and 227 to 237; these read PQYS…QQQQ and QQYPSGQGFFQ. The span at 238–250 shows a compositional bias: polar residues; it reads PSQQNPQAQGSFQ.

This sequence belongs to the gliadin/glutenin family. Substrate of transglutaminase.

Its function is as follows. Gliadin is the major seed storage protein in wheat. This is Alpha/beta-gliadin A-II from Triticum aestivum (Wheat).